Here is a 702-residue protein sequence, read N- to C-terminus: MKAAVRSVKNFSKGYTDTQIKVRNATTNDSWGPSGTAMAEIAELTYDQNEMLEVMDIIDRRLNDKGKNWRHVFKSLSLLEYCLHNGSENVVRWAKDNIYIITTLREFVYVDDNGHDQGQNVRTKAKEITSLLEDEHALKEARGDSRERDRDRDRTRSSRFDDDDDDRAPYEESRLSRAPSRASRYDDDDRDHRSRRRSRSRRPGRSRSRRRSRRPSPSAEHNSAEENDPELQRVIEESKRQAEEDAKRRNMANDSEAELQKAIQLSKEEDEARQRHQREREQQEQAFMGNQQNAYQPVDFFGNPVQPQPTGFLQQQPTGFIRPQNTGFVQPQYTGFVQPQHTGFVQPQATGFMQPQRTGFVQPQATGFVQPQATGFVQPQATGFMQPQRTGFVQPQATGFMQPQRTGFVQPQATGFMQPQRTGFVQPQATGFIQPQRTGFVQPQQNGFFNPQPTGYMQPQRTGMMQPQRTGFSQPFESNNPFPVMQPQRTGFGQTPNAPMMAPNHTGYVHPQPTGLQRQTTGYTGNNNPYSRPLQSQSTGILQQQQQQSAPRLEPTKTGSNNPFAQFSNLPSQSTAPATKPMKPVRTGDDRFSNIAQAISTGNPMGTDSFGNIGLTRVPTQHTGSKFTNSAGQTIQAQATGNTHNPFQSQQATGYYKQPMQQQQNMQQPYYNQQNYNYQNQQPMQGMQQQSMQPQVGSLIDL.

Positions 10–142 (NFSKGYTDTQ…EDEHALKEAR (133 aa)) constitute an ENTH domain. Basic and acidic residues-rich tracts occupy residues 136–160 (HALKEARGDSRERDRDRDRTRSSRF) and 183–192 (SRYDDDDRDH). A disordered region spans residues 136 to 285 (HALKEARGDS…HQREREQQEQ (150 aa)). Basic residues predominate over residues 193–214 (RSRRRSRSRRPGRSRSRRRSRR). Residues Ser212, Ser216, Ser218, and Ser223 each carry the phosphoserine modification. UIM domains are found at residues 226–245 (ENDPELQRVIEESKRQAEED) and 254–273 (DSEAELQKAIQLSKEEDEAR). Basic and acidic residues predominate over residues 230–248 (ELQRVIEESKRQAEEDAKR). A Phosphoserine modification is found at Ser255. The span at 266 to 283 (SKEEDEARQRHQREREQQ) shows a compositional bias: basic and acidic residues. Thr406 carries the post-translational modification Phosphothreonine. Disordered regions lie at residues 504 to 589 (NHTG…RTGD) and 683 to 702 (PMQGMQQQSMQPQVGSLIDL). Positions 514–534 (TGLQRQTTGYTGNNNPYSRPL) are enriched in polar residues. Residues 535–549 (QSQSTGILQQQQQQS) are compositionally biased toward low complexity. Residues 557–577 (KTGSNNPFAQFSNLPSQSTAP) are compositionally biased toward polar residues. Positions 683-695 (PMQGMQQQSMQPQ) are enriched in low complexity.

It belongs to the epsin family.

It localises to the cytoplasm. The protein resides in the membrane. In terms of biological role, binds to membranes enriched in phosphatidylinositol 3,5-bisphosphate (PtdIns(3,5)P2) and phosphatidylinositol 4,5-bisphosphate (PtdIns(4,5)P2). Required for endocytosis and localization of actin. This Schizosaccharomyces pombe (strain 972 / ATCC 24843) (Fission yeast) protein is Epsin-1 (ent1).